A 346-amino-acid polypeptide reads, in one-letter code: Methylthioribose-1-phosphate isomerase (346 aa).

Residues 54-56 (RGA), Arg-91, and Gln-192 contribute to the substrate site. Asp-233 acts as the Proton donor in catalysis. Position 243–244 (243–244 (NK)) interacts with substrate.

Belongs to the eIF-2B alpha/beta/delta subunits family. MtnA subfamily.

The catalysed reaction is 5-(methylsulfanyl)-alpha-D-ribose 1-phosphate = 5-(methylsulfanyl)-D-ribulose 1-phosphate. The protein operates within amino-acid biosynthesis; L-methionine biosynthesis via salvage pathway; L-methionine from S-methyl-5-thio-alpha-D-ribose 1-phosphate: step 1/6. Its function is as follows. Catalyzes the interconversion of methylthioribose-1-phosphate (MTR-1-P) into methylthioribulose-1-phosphate (MTRu-1-P). The polypeptide is Methylthioribose-1-phosphate isomerase (Yersinia enterocolitica serotype O:8 / biotype 1B (strain NCTC 13174 / 8081)).